Reading from the N-terminus, the 312-residue chain is MRIPVGDFDLEMTQRSGQTSQPPWREVEGAFRELLIIEGVPCPVEVRNEAGVLRVRPYVDVPQKTLREKIEYIFDLKFDIEDFYTFLEDKNLSYTLDSSRGLRLFLAKDPFECVISSIASANCSVVRWTRSIEDIRRLWGQANTFNGETFHTFPSPHVLTGVAEGSLEDLQRAEDNLPSDFSFNDLRSCGVGYRAPYIRETSRILAEEMDIRRIDGMDYDDARELLLELSGVGPKVADCILLYGFRKTEAFPVDVWIRRIMNHIHPGRNFNDRSMVEFARREYGEMADYVQLYLFNHARRSGLLDRLRQGTG.

A disordered region spans residues 1–22 (MRIPVGDFDLEMTQRSGQTSQP). The span at 13-22 (TQRSGQTSQP) shows a compositional bias: polar residues. K235 is a catalytic residue.

The protein belongs to the type-1 OGG1 family.

The catalysed reaction is 2'-deoxyribonucleotide-(2'-deoxyribose 5'-phosphate)-2'-deoxyribonucleotide-DNA = a 3'-end 2'-deoxyribonucleotide-(2,3-dehydro-2,3-deoxyribose 5'-phosphate)-DNA + a 5'-end 5'-phospho-2'-deoxyribonucleoside-DNA + H(+). DNA repair enzyme that incises DNA at 8-oxoG residues. Excises 7,8-dihydro-8-oxoguanine and 2,6-diamino-4-hydroxy-5-N-methylformamidopyrimidine (FAPY) from damaged DNA. Has a beta-lyase activity that nicks DNA 3' to the lesion. This is Probable N-glycosylase/DNA lyase from Methanothermobacter thermautotrophicus (strain ATCC 29096 / DSM 1053 / JCM 10044 / NBRC 100330 / Delta H) (Methanobacterium thermoautotrophicum).